A 373-amino-acid chain; its full sequence is MSDNSQKKVIVGMSGGVDSSVSAYLLQQQGYQVAGLFMKNWEEDDGEEYCSAATDLADAQAVCDKLGMELHTVNFAAEYWDNVFELFLEEYKAGRTPNPDILCNKEIKFKAFLEFAAEDLGADYIATGHYVRRQDVNGKSRLLRGLDGNKDQSYFLYTLSHEQLAQSLFPVGELEKPEVRRIAEQLELVTAKKKDSTGICFIGERKFRDFLGRYLPAQPGPIMTVDGQHVGEHQGLMYHTLGQRKGLGIGGTKEGGDDPWYVVDKDVANNILLVAQGHEHPRLMSVGLIAQQLHWVDREPVTAAFRCVVKTRYRQQDIPCTVTPLDDERVEVRFDDPVAAVTPGQSAVFYQGEVCLGGGIIEERYPLPGSVAN.

ATP is bound by residues glycine 12–serine 19 and methionine 38. The interval asparagine 98–aspartate 100 is interaction with target base in tRNA. The active-site Nucleophile is the cysteine 103. Cysteine 103 and cysteine 200 are joined by a disulfide. Glycine 128 provides a ligand contact to ATP. An interaction with tRNA region spans residues lysine 150–glutamine 152. Cysteine 200 (cysteine persulfide intermediate) is an active-site residue. The interaction with tRNA stretch occupies residues arginine 312–tyrosine 313.

The protein belongs to the MnmA/TRMU family. Interacts with TusE.

Its subcellular location is the cytoplasm. The catalysed reaction is S-sulfanyl-L-cysteinyl-[protein] + uridine(34) in tRNA + AH2 + ATP = 2-thiouridine(34) in tRNA + L-cysteinyl-[protein] + A + AMP + diphosphate + H(+). In terms of biological role, catalyzes the 2-thiolation of uridine at the wobble position (U34) of tRNA(Lys), tRNA(Glu) and tRNA(Gln), leading to the formation of s(2)U34, the first step of tRNA-mnm(5)s(2)U34 synthesis. Sulfur is provided by IscS, via a sulfur-relay system. Binds ATP and its substrate tRNAs. The polypeptide is tRNA-specific 2-thiouridylase MnmA (Yersinia enterocolitica serotype O:8 / biotype 1B (strain NCTC 13174 / 8081)).